Consider the following 339-residue polypeptide: MDLQENIPLQSLNTFGIAATARYYSLVKSQAMLKQLLNNSSLHSLLKLTIGGGSNILFVKDFDGWVIHMDIKGIEKLGEDNNHIWLHVGAGVNWHSLVLYCIEKGYAGIENLSLIPGTVGAAPIQNIGAYGVEFSEVFESLEALEISTGLIKKFNKEACAFSYRDSIFKSSLKGQYIILQVTLRLNKQPTFQTNYGAIQEVLASMKPRTLSIKAISDAVIYIRQQKLPNPAYIGNAGSFFKNPIIDQAKATLLRNKYPNIPVHILANGYAKLPAAWLIEQSGWKGYRHDAVGVHLHQPLVIVNYGGATGKAVYKLAQAIQASVAENFSVMLEPEVNIIQ.

Residues 16-188 (GIAATARYYS…LQVTLRLNKQ (173 aa)) form the FAD-binding PCMH-type domain. Arginine 164 is a catalytic residue. The Proton donor role is filled by serine 238. Residue glutamate 334 is part of the active site.

Belongs to the MurB family. The cofactor is FAD.

The protein localises to the cytoplasm. The catalysed reaction is UDP-N-acetyl-alpha-D-muramate + NADP(+) = UDP-N-acetyl-3-O-(1-carboxyvinyl)-alpha-D-glucosamine + NADPH + H(+). It functions in the pathway cell wall biogenesis; peptidoglycan biosynthesis. In terms of biological role, cell wall formation. This is UDP-N-acetylenolpyruvoylglucosamine reductase from Amoebophilus asiaticus (strain 5a2).